Reading from the N-terminus, the 256-residue chain is Floral homeotic protein APETALA 1 (256 aa).

Residues 1–61 (MGRGRVQLKR…GKLFEYSTDS (61 aa)) enclose the MADS-box domain. Positions 88–178 (NTNWSMEYNR…SKQIKEREKI (91 aa)) constitute a K-box domain. The stretch at 88–185 (NTNWSMEYNR…EKILRAQQEQ (98 aa)) forms a coiled coil.

In terms of assembly, homodimer capable of binding to CArG-box sequences. Heterodimer with SEP3, AP1 and SVP. Binds AP3/PI to form a ternary complex. Interacts with the SEU-LUG corepressor complex when complexed to AGL24 or SVP. Interacts with AGL15 and AGL16. Interacts with TT16/AGL32. As to expression, expressed in young flower primordia, later becomes localized to sepals and petals.

The protein resides in the nucleus. Transcription factor that promotes early floral meristem identity in synergy with LEAFY. Is required subsequently for the transition of an inflorescence meristem into a floral meristem. Is indispensable for normal development of sepals and petals in flowers. Positively regulates the B class homeotic proteins APETALA3 and PISTILLATA with the cooperation of LEAFY and UFO. Interacts with SEPALLATA3 or AP3/PI heterodimer to form complexes that could be involved in genes regulation during floral meristem development. Positively regulates AGAMOUS in cooperation with LEAFY. Displays a redundant function with CAULIFLOWER in the up-regulation of LEAFY. Together with AGL24 and SVP, controls the identity of the floral meristem and regulates expression of class B, C and E genes. Represses flowering time genes AGL24, SVP and SOC1 in emerging floral meristems. In Arabidopsis thaliana (Mouse-ear cress), this protein is Floral homeotic protein APETALA 1 (AP1).